We begin with the raw amino-acid sequence, 338 residues long: Methionyl-tRNA formyltransferase (338 aa).

(6S)-5,6,7,8-tetrahydrofolate is bound at residue 110–113 (SLLP).

Belongs to the Fmt family.

The catalysed reaction is L-methionyl-tRNA(fMet) + (6R)-10-formyltetrahydrofolate = N-formyl-L-methionyl-tRNA(fMet) + (6S)-5,6,7,8-tetrahydrofolate + H(+). Its function is as follows. Attaches a formyl group to the free amino group of methionyl-tRNA(fMet). The formyl group appears to play a dual role in the initiator identity of N-formylmethionyl-tRNA by promoting its recognition by IF2 and preventing the misappropriation of this tRNA by the elongation apparatus. This Parasynechococcus marenigrum (strain WH8102) protein is Methionyl-tRNA formyltransferase.